The following is a 342-amino-acid chain: L-threonine 3-dehydrogenase (342 aa).

C38 contacts Zn(2+). Active-site charge relay system residues include T40 and H43. Zn(2+) contacts are provided by H63, E64, C93, C96, C99, and C107. Residues I175, D195, R200, 262 to 264 (LGL), and 286 to 287 (IY) contribute to the NAD(+) site.

The protein belongs to the zinc-containing alcohol dehydrogenase family. Homotetramer. Zn(2+) is required as a cofactor.

It is found in the cytoplasm. The catalysed reaction is L-threonine + NAD(+) = (2S)-2-amino-3-oxobutanoate + NADH + H(+). It functions in the pathway amino-acid degradation; L-threonine degradation via oxydo-reductase pathway; glycine from L-threonine: step 1/2. Its function is as follows. Catalyzes the NAD(+)-dependent oxidation of L-threonine to 2-amino-3-ketobutyrate. This Streptomyces avermitilis (strain ATCC 31267 / DSM 46492 / JCM 5070 / NBRC 14893 / NCIMB 12804 / NRRL 8165 / MA-4680) protein is L-threonine 3-dehydrogenase.